A 398-amino-acid polypeptide reads, in one-letter code: 4-hydroxy-3-methylbut-2-enyl diphosphate reductase (398 aa).

A [4Fe-4S] cluster-binding site is contributed by C66. H96 is a (2E)-4-hydroxy-3-methylbut-2-enyl diphosphate binding site. H96 serves as a coordination point for dimethylallyl diphosphate. H96 contributes to the isopentenyl diphosphate binding site. C157 provides a ligand contact to [4Fe-4S] cluster. H185 provides a ligand contact to (2E)-4-hydroxy-3-methylbut-2-enyl diphosphate. H185 is a binding site for dimethylallyl diphosphate. H185 serves as a coordination point for isopentenyl diphosphate. The Proton donor role is filled by E187. T250 is a (2E)-4-hydroxy-3-methylbut-2-enyl diphosphate binding site. C288 is a binding site for [4Fe-4S] cluster. (2E)-4-hydroxy-3-methylbut-2-enyl diphosphate contacts are provided by S317, S318, N319, and S379. Positions 317, 318, 319, and 379 each coordinate dimethylallyl diphosphate. 4 residues coordinate isopentenyl diphosphate: S317, S318, N319, and S379.

Belongs to the IspH family. The cofactor is [4Fe-4S] cluster.

It catalyses the reaction isopentenyl diphosphate + 2 oxidized [2Fe-2S]-[ferredoxin] + H2O = (2E)-4-hydroxy-3-methylbut-2-enyl diphosphate + 2 reduced [2Fe-2S]-[ferredoxin] + 2 H(+). The enzyme catalyses dimethylallyl diphosphate + 2 oxidized [2Fe-2S]-[ferredoxin] + H2O = (2E)-4-hydroxy-3-methylbut-2-enyl diphosphate + 2 reduced [2Fe-2S]-[ferredoxin] + 2 H(+). It participates in isoprenoid biosynthesis; dimethylallyl diphosphate biosynthesis; dimethylallyl diphosphate from (2E)-4-hydroxy-3-methylbutenyl diphosphate: step 1/1. The protein operates within isoprenoid biosynthesis; isopentenyl diphosphate biosynthesis via DXP pathway; isopentenyl diphosphate from 1-deoxy-D-xylulose 5-phosphate: step 6/6. In terms of biological role, catalyzes the conversion of 1-hydroxy-2-methyl-2-(E)-butenyl 4-diphosphate (HMBPP) into a mixture of isopentenyl diphosphate (IPP) and dimethylallyl diphosphate (DMAPP). Acts in the terminal step of the DOXP/MEP pathway for isoprenoid precursor biosynthesis. The polypeptide is 4-hydroxy-3-methylbut-2-enyl diphosphate reductase (Prochlorococcus marinus (strain MIT 9313)).